The primary structure comprises 529 residues: T-complex protein 1 subunit beta (529 aa).

Belongs to the TCP-1 chaperonin family. In terms of assembly, heterooligomeric complex of about 850 to 900 kDa that forms two stacked rings, 12 to 16 nm in diameter.

Its subcellular location is the cytoplasm. Molecular chaperone; assists the folding of proteins upon ATP hydrolysis. Known to play a role, in vitro, in the folding of actin and tubulin. This Caenorhabditis elegans protein is T-complex protein 1 subunit beta (cct-2).